The following is a 152-amino-acid chain: 3-dehydroquinate dehydratase (152 aa).

Tyrosine 26 functions as the Proton acceptor in the catalytic mechanism. Residues asparagine 78, histidine 84, and aspartate 91 each coordinate substrate. Histidine 104 acts as the Proton donor in catalysis. Residues 105–106 (IS) and arginine 115 each bind substrate.

This sequence belongs to the type-II 3-dehydroquinase family. Homododecamer.

It carries out the reaction 3-dehydroquinate = 3-dehydroshikimate + H2O. It participates in metabolic intermediate biosynthesis; chorismate biosynthesis; chorismate from D-erythrose 4-phosphate and phosphoenolpyruvate: step 3/7. Its function is as follows. Catalyzes a trans-dehydration via an enolate intermediate. This chain is 3-dehydroquinate dehydratase, found in Buchnera aphidicola subsp. Cinara cedri (strain Cc).